The primary structure comprises 431 residues: O-methyltransferase xanE (431 aa).

S-adenosyl-L-methionine is bound at residue D283. The active-site Proton acceptor is the H330.

Belongs to the class I-like SAM-binding methyltransferase superfamily. Cation-independent O-methyltransferase family.

The protein operates within secondary metabolite biosynthesis. Functionally, O-methyltransferase; part of the gene cluster that mediates the biosynthesis of the isocyanide xanthocillin and its derivatives. The first step of the pathway consists in the conversion of tyrosine into a vinyl-isonitrile intermediate by the isocyanide synthase xanB. Subsequent oxidative dimerization of this intermediate to form xanthocillin may involve the cytochrome P450 monooxygenase xanG, whose expression is coregulated with that of XanB. Xanthocillin can be further modified by the isonitrile hydratase-like protein xanA which introduces N-formyl groups and the methyltransferase xanE which introduces methyl groups, leading to the production of several derivatives including fumiformamide. Finally, fumiformamide can be subject to both oxidative and reductive cyclization to yield melanocins E and F, respectively. The chain is O-methyltransferase xanE from Aspergillus fumigatus (strain ATCC MYA-4609 / CBS 101355 / FGSC A1100 / Af293) (Neosartorya fumigata).